The chain runs to 557 residues: MFS-type transporter clz4 (557 aa).

14 consecutive transmembrane segments (helical) span residues 22–42 (LIIVILTLGVVLFVINIDHNG), 59–79 (SITWAGSSQLIATTVFSVLYG), 89–109 (ALFVSALWVFSIAELGCGFAT), 120–140 (LTGASGGGIGNLSIIIATDVV), 150–170 (AVVAPFMVLGNICGPLVAAGV), 179–199 (GLFWLISPLGVLSAVLAGYIL), 217–237 (WLGSFTSTIAIVGFMVAVSGP), 245–265 (SLLVISLLSVSGVAFLAFLFI), 269–289 (LATLPVIPLTIFAIPDVSALL), 319–339 (VISGVLLFPIIAVQVVVSMIA), 346–366 (SGQYGLTIRLGVALLLIGSLL), 379–399 (VIIVLLVIGIGVGAANQPMVI), 419–439 (FFRFLGSACGVVMSAAILQST), and 479–499 (HVYIASAAASVLCSLGLFVWK). Residues 505–523 (SRPTENNDDIEHAPARGIE) are compositionally biased toward basic and acidic residues. Residues 505-557 (SRPTENNDDIEHAPARGIEREDEQSSLIYDREPSAVSYGTVEAGEPNRLRRGG) are disordered.

It belongs to the major facilitator superfamily. TCR/Tet family.

Its subcellular location is the membrane. MFS-type transporter; part of the gene cluster that mediates the biosynthesis of squalestatin S1 (SQS1, also known as zaragozic acid A), a heavily oxidized fungal polyketide that offers potent cholesterol lowering activity by targeting squalene synthase (SS). The polypeptide is MFS-type transporter clz4 (Cochliobolus lunatus (Filamentous fungus)).